Here is a 164-residue protein sequence, read N- to C-terminus: ATP synthase subunit b (164 aa).

Residues 6 to 26 (GELIGNFILITGSFILLLVLI) traverse the membrane as a helical segment.

This sequence belongs to the ATPase B chain family. As to quaternary structure, F-type ATPases have 2 components, F(1) - the catalytic core - and F(0) - the membrane proton channel. F(1) has five subunits: alpha(3), beta(3), gamma(1), delta(1), epsilon(1). F(0) has three main subunits: a(1), b(2) and c(10-14). The alpha and beta chains form an alternating ring which encloses part of the gamma chain. F(1) is attached to F(0) by a central stalk formed by the gamma and epsilon chains, while a peripheral stalk is formed by the delta and b chains.

Its subcellular location is the cell membrane. F(1)F(0) ATP synthase produces ATP from ADP in the presence of a proton or sodium gradient. F-type ATPases consist of two structural domains, F(1) containing the extramembraneous catalytic core and F(0) containing the membrane proton channel, linked together by a central stalk and a peripheral stalk. During catalysis, ATP synthesis in the catalytic domain of F(1) is coupled via a rotary mechanism of the central stalk subunits to proton translocation. Functionally, component of the F(0) channel, it forms part of the peripheral stalk, linking F(1) to F(0). This Streptococcus pneumoniae serotype 2 (strain D39 / NCTC 7466) protein is ATP synthase subunit b.